The sequence spans 1605 residues: Ribosome-binding protein 1 (1605 aa).

Residues 1–7 (MDIYDTQ) lie on the Lumenal side of the membrane. The helical transmembrane segment at 8–28 (TLGVVVFGGFMVVSAIGIFLV) threads the bilayer. The Cytoplasmic portion of the chain corresponds to 29–1605 (STFSMKETSY…GSSSKEGTSV (1577 aa)). Residues 44–88 (NQRKEMAKTHHQKGEKKKKEKTVEKKGKTKKKEEKPNGKIPEHDL) are disordered. The segment covering 52–63 (THHQKGEKKKKE) has biased composition (basic residues). The segment covering 64-88 (KTVEKKGKTKKKEEKPNGKIPEHDL) has biased composition (basic and acidic residues). Residue Ser111 is modified to Phosphoserine. The tract at residues 114 to 150 (SSVGHTPIATVPAMPQEKLASSPKDRKKKEKKVAKVE) is disordered. Lys148 is covalently cross-linked (Glycyl lysine isopeptide (Lys-Gly) (interchain with G-Cter in SUMO2)). A phosphoserine mark is found at Ser159 and Ser165. A disordered region spans residues 172-849 (ATPKEVPMVA…PGPPDCDGPL (678 aa)). Tandem repeats lie at residues 196 to 205 (SQGKKGQGAQ), 206 to 215 (NQAKKGEGAQ), 216 to 225 (NQGKKGEGAQ), 226 to 235 (NQAKKGEGAQ), 236 to 245 (NQAKKGEGAQ), 246 to 255 (NQGKKGEGAQ), 256 to 265 (NQAKKGEGGQ), 266 to 275 (NQAKKGEGAQ), 276 to 285 (NQGKKGEGAQ), 286 to 295 (NQGKKGEGAQ), 296 to 305 (NQAKKGEGAQ), 306 to 315 (NQAKKGEGAQ), 316 to 325 (NQGKKGEGAQ), 326 to 335 (NQSKKGEGAQ), 336 to 345 (NQAKKGEGGQ), 346 to 355 (NQAKKGEGAQ), 356 to 365 (NQAKKGEGAQ), 366 to 375 (NQAKKGEGVQ), 376 to 385 (NQAKKGVEGA), 386 to 395 (QNQGKKGEAN), 396 to 405 (QNQAKKGEGG), 406 to 415 (QNQTKKGEGP), 416 to 425 (QNQGKKGEAA), 426 to 435 (QKQDKKIEGA), 436 to 445 (QNQGKKPEGT), 446 to 455 (SNQGKKGEGA), 456 to 465 (QNQGKKGEGA), 466 to 475 (QNQSKKGEGA), 476 to 485 (QNQAKKGEGG), 486 to 495 (QNQAKKGEGA), 496 to 505 (QNQAKKGEGA), 506 to 515 (QNQAKKGEGV), 516 to 525 (QNQAKKGVEG), 527 to 536 (QNQGKKGEAN), 537 to 546 (QNQAKKGEGG), 547 to 556 (QNQTKKGEGP), 557 to 566 (QNQGKKGEAA), 567 to 576 (QKQDKKIEGA), 577 to 586 (QNQGKKPEGT), 587 to 596 (SNQGKKGEGA), 597 to 606 (QNQGKKGEGA), 607 to 616 (QNQGKKGEGA), 617 to 626 (QNQGKKGEGA), 628 to 637 (NQGKKGEGAQ), 638 to 647 (NQGKKGEGAQ), 648 to 657 (NQGKKGEGAQ), 658 to 667 (NQGKKGEGPQ), 668 to 677 (NQAKKGEGAQ), 678 to 687 (NQGKKGEGAQ), 688 to 697 (NQGKKGEGAQ), 698 to 707 (NQGKKAEGVQ), 708 to 717 (SQSKKGEGTQ), 718 to 727 (NQGKKGDGNP), 729 to 738 (QGKKGEGASN), 739 to 748 (QNRKTDTVAN), 749 to 758 (QGTKQEGVSN), 759 to 768 (QVKKSEGSPN), 769 to 778 (QGKKAEGAPN), 779 to 788 (QGKKKDGSPS), 789 to 798 (QAKKVDAAAN), and 799 to 808 (QGKKSEMAPA). Residues 196–808 (SQGKKGQGAQ…QGKKSEMAPA (613 aa)) are 61 X 10 AA tandem repeats of [NSQ]-[NKQVGA]-[GSAQKRT]-[ASGDTK]-[KGTQSAV]-[KGAED]-[EQVGIPTDMA]-[EGVAS]-[AGVPETNS]-[AQNGPTVS]. A compositionally biased stretch (low complexity) spans 197–208 (QGKKGQGAQNQA). Polar residues-rich tracts occupy residues 224–258 (AQNQ…QNQA), 274–338 (AQNQ…QNQA), 354–378 (AQNQ…QNQA), and 385–399 (AQNQ…QNQA). Basic and acidic residues predominate over residues 420 to 433 (KKGEAAQKQDKKIE). Composition is skewed to polar residues over residues 435–479 (AQNQ…QNQA), 495–519 (AQNQ…QNQA), and 526–540 (AQNQ…QNQA). Basic and acidic residues predominate over residues 561–574 (KKGEAAQKQDKKIE). 2 stretches are compositionally biased toward polar residues: residues 576-720 (AQNQ…QNQG) and 736-769 (ASNQ…SPNQ). Ser786 carries the post-translational modification Phosphoserine. The span at 811-821 (QKASMVQSQEA) shows a compositional bias: polar residues. Phosphoserine is present on Ser818. A Glycyl lysine isopeptide (Lys-Gly) (interchain with G-Cter in SUMO1) cross-link involves residue Lys823. Lys1135 bears the N6-acetyllysine mark. Ser1162 and Ser1178 each carry phosphoserine. 2 disordered regions span residues 1460–1481 (MRSH…AEQD) and 1571–1605 (TTQE…GTSV). Positions 1576-1598 (LTKEKDTVKKLQEQLGKAEDGSS) are enriched in basic and acidic residues.

In terms of tissue distribution, widely expressed.

The protein resides in the endoplasmic reticulum membrane. Functionally, acts as a ribosome receptor and mediates interaction between the ribosome and the endoplasmic reticulum membrane. The protein is Ribosome-binding protein 1 (Rrbp1) of Mus musculus (Mouse).